The following is a 60-amino-acid chain: Large ribosomal subunit protein uL30 (60 aa).

Belongs to the universal ribosomal protein uL30 family. In terms of assembly, part of the 50S ribosomal subunit.

In Paraburkholderia phytofirmans (strain DSM 17436 / LMG 22146 / PsJN) (Burkholderia phytofirmans), this protein is Large ribosomal subunit protein uL30.